A 353-amino-acid polypeptide reads, in one-letter code: MQTPQIIWSLIAPQYRGLANKVNRKLIQSSIKHYFWYCKQFDKLVHPFYYLTAKKHTPLFNQQLVDLAQSTLYFYNLSVFVDKSNAGQIIKNVTGSVEPNQITVIFGPSGSGKTTLIKQLGLVENPTCGFLNCGNFYYFANQKHNRATKQFQNSIGYVLQKAEEQFLCDSVLEEVLTGAINLGLCQKGDVNFAKKYLEMCGLHHIPLIKNPLELSGGQKKRLALASVLAMQVQFLILDEPTVGLDQEGKALKSALLKQLKQVTRIMIVSHDVDFIYETADSLIQLEAGQIVDQMSVADFFNNMQLLQRYEITPPLVVQTIQLLQAKGVQLNDPLAIKTVHDLIDQLKPLFHDQ.

Residues 72-312 (LYFYNLSVFV…MQLLQRYEIT (241 aa)) form the ABC transporter domain. 107–114 (GPSGSGKT) contacts ATP.

Belongs to the ABC transporter superfamily.

The chain is Putative ABC transporter ATP-binding protein MG303 homolog from Mycoplasma pneumoniae (strain ATCC 29342 / M129 / Subtype 1) (Mycoplasmoides pneumoniae).